We begin with the raw amino-acid sequence, 670 residues long: Solute carrier organic anion transporter family member 1A1 (670 aa).

Residues 1–20 lie on the Cytoplasmic side of the membrane; that stretch reads MEETEKKIATQEGRLFSKMK. The helical transmembrane segment at 21-40 threads the bilayer; it reads VFLLSLTCACLTKSLSGVYM. Topologically, residues 41-59 are extracellular; the sequence is NSMLTQIERQFDISTSVAG. Residues 60 to 80 form a helical membrane-spanning segment; sequence LINGSFEIGNLFFIVFVSYFG. The Cytoplasmic portion of the chain corresponds to 81 to 86; sequence TKLHRP. Residues 87–111 form a helical membrane-spanning segment; sequence VVIGIGCVIMGLGCLLMSLPHFFMG. The Extracellular segment spans residues 112-155; that stretch reads RYEYETTISPTGNLSSNSFLCMENRTQTLKPTQDPAECVKEMKS. Asparagine 124 and asparagine 135 each carry an N-linked (GlcNAc...) asparagine glycan. The helical transmembrane segment at 156 to 184 threads the bilayer; sequence LMWICVMVGNIIRGIGETPIVPLGISYIE. Topologically, residues 185 to 203 are cytoplasmic; sequence DFAKSENSPLYIGILEMGK. Residues 204–224 form a helical membrane-spanning segment; the sequence is VAGPIFGLLLGSYCAQIYVDI. Topologically, residues 225 to 242 are extracellular; the sequence is GSVNTDDLTITPSDTRWV. The chain crosses the membrane as a helical span at residues 243-267; the sequence is GAWWIGFLVCAGVNILTSIPFFFLP. Residues 268 to 311 are Cytoplasmic-facing; that stretch reads KALPKKGQQENVAVTKDGKVEKYGGQAREENLGITKDFLTFMKR. The chain crosses the membrane as a helical span at residues 312–333; that stretch reads LFCNPIYMLFILTSVLQVNGFI. Over 334-353 the chain is Extracellular; it reads NKFTFLPKYLEQQYGKSTAE. A helical transmembrane segment spans residues 354–377; that stretch reads AIFLIGVYSLPPICLGYLIGGFIM. Residues 378 to 381 lie on the Cytoplasmic side of the membrane; that stretch reads KKFK. A helical membrane pass occupies residues 382–405; sequence ITVKKAAYLAFCLSVFEYLLFLCH. The Extracellular portion of the chain corresponds to 406-513; sequence FMLTCDNAAV…PECANRLQYF (108 aa). The Kazal-like domain maps to 433 to 488; the sequence is SKVLADCNTRCSCSTNTWDPVCGDNGVAYMSACLAGCKKFVGTGTNMVFQDCSCIQ. Intrachain disulfides connect cysteine 439-cysteine 469, cysteine 445-cysteine 465, and cysteine 454-cysteine 486. Residue asparagine 492 is glycosylated (N-linked (GlcNAc...) asparagine). A helical membrane pass occupies residues 514 to 536; it reads LILTIIISFIYSLTAIPGYMVFL. The Cytoplasmic segment spans residues 537-545; the sequence is RCVKSEEKS. Residues 546-571 traverse the membrane as a helical segment; sequence LGVGLHTFCIRVFAGIPAPVYFGALI. Topologically, residues 572–605 are extracellular; the sequence is DRTCLHWGTLKCGQRGACRMYDINSFRHIYLGLP. The helical transmembrane segment at 606 to 623 threads the bilayer; that stretch reads IALRGSSYLPAFFILILM. The Cytoplasmic portion of the chain corresponds to 624-670; the sequence is RKFQFPGDIDSSATDHTEMMLGEKESEHTDVHGSPQVENDGELKTKL. 2 positions are modified to phosphoserine: serine 634 and serine 635. Residues 645-654 are compositionally biased toward basic and acidic residues; sequence GEKESEHTDV. Residues 645–670 are disordered; that stretch reads GEKESEHTDVHGSPQVENDGELKTKL.

Belongs to the organo anion transporter (TC 2.A.60) family. In terms of assembly, binds to PDZK1. Interaction with PDZK1 is required for expression on hepatocyte surface. Post-translationally, glycosylated. Highly expressed in liver and kidney, and at lower levels in brain, lung, skeletal muscle and proximal colon.

It localises to the basolateral cell membrane. The catalysed reaction is estrone 3-sulfate(out) + hydrogencarbonate(in) = estrone 3-sulfate(in) + hydrogencarbonate(out). It carries out the reaction taurocholate(out) + hydrogencarbonate(in) = taurocholate(in) + hydrogencarbonate(out). It catalyses the reaction L-thyroxine(out) = L-thyroxine(in). The enzyme catalyses prostaglandin E2(out) = prostaglandin E2(in). The catalysed reaction is 17beta-estradiol 17-O-(beta-D-glucuronate)(out) = 17beta-estradiol 17-O-(beta-D-glucuronate)(in). It carries out the reaction dehydroepiandrosterone 3-sulfate(out) = dehydroepiandrosterone 3-sulfate(in). In terms of biological role, mediates the Na(+)-independent transport of organic anions such as steroid sulfate conjugates (dehydroepiandrosterone sulfate (DHEAS), 17-beta-glucuronosyl estradiol, estrone-3-sulfate), conjugated (taurocholate) and unconjugated (cholate) bile acids, prostaglandin E2 (PGE2) and L-thyroxine T4. Also capable of transporting sulfobromophthalein (BSP), ouabain and gadoxetate. Hydrogencarbonate/HCO3(-) acts as the probable counteranion that exchanges for organic anions. Shows a pH-sensitive substrate specificity which may be ascribed to the protonation state of the binding site and leads to a stimulation of substrate transport in an acidic microenvironment. The polypeptide is Solute carrier organic anion transporter family member 1A1 (Rattus norvegicus (Rat)).